Reading from the N-terminus, the 327-residue chain is tRNA pseudouridine synthase B (327 aa).

The active-site Nucleophile is the D83.

The protein belongs to the pseudouridine synthase TruB family. Type 1 subfamily.

The catalysed reaction is uridine(55) in tRNA = pseudouridine(55) in tRNA. In terms of biological role, responsible for synthesis of pseudouridine from uracil-55 in the psi GC loop of transfer RNAs. The sequence is that of tRNA pseudouridine synthase B from Mesomycoplasma hyopneumoniae (strain 232) (Mycoplasma hyopneumoniae).